The following is a 545-amino-acid chain: T-complex protein 1 subunit gamma (545 aa).

Methionine 1 carries the post-translational modification N-acetylmethionine. Positions 1–24 (MMGHRPVLVLSQNTKRESGRKVQS) are disordered. Serine 11 is modified (phosphoserine). Residue lysine 15 forms a Glycyl lysine isopeptide (Lys-Gly) (interchain with G-Cter in SUMO2) linkage. Residue glycine 42 coordinates ADP. Glycine 42 contacts ATP. Aspartate 93 is a binding site for Mg(2+). ADP is bound by residues glycine 94, threonine 95, threonine 96, serine 97, threonine 162, and lysine 163. Glycine 94, threonine 95, and threonine 96 together coordinate ATP. Phosphoserine is present on serine 170. Lysine 222 bears the N6-acetyllysine mark. Phosphoserine occurs at positions 243 and 244. Position 247 is a phosphotyrosine (tyrosine 247). Residues lysine 248 and lysine 249 each participate in a glycyl lysine isopeptide (Lys-Gly) (interchain with G-Cter in SUMO2) cross-link. A Phosphoserine modification is found at serine 252. Cysteine 366 and cysteine 372 are disulfide-bonded. Lysine 381 participates in a covalent cross-link: Glycyl lysine isopeptide (Lys-Gly) (interchain with G-Cter in SUMO2). Glycine 411 is a binding site for ADP. Glycine 411 lines the ATP pocket. Threonine 430 and threonine 459 each carry phosphothreonine. The ADP site is built by glycine 482, glutamate 483, glutamate 497, and lysine 502. Glycine 482 contributes to the ATP binding site. Glutamate 497 contacts ATP. The interval 526 to 545 (HKKKGDDQNRQTGAPDAGQE) is disordered.

It belongs to the TCP-1 chaperonin family. As to quaternary structure, component of the chaperonin-containing T-complex (TRiC), a hexadecamer composed of two identical back-to-back stacked rings enclosing a protein folding chamber. Each ring is made up of eight different subunits: TCP1/CCT1, CCT2, CCT3, CCT4, CCT5, CCT6A/CCT6, CCT7, CCT8. Interacts with PACRG. Interacts with DNAAF4. Interacts with DLEC1.

Its subcellular location is the cytoplasm. The enzyme catalyses ATP + H2O = ADP + phosphate + H(+). Its function is as follows. Component of the chaperonin-containing T-complex (TRiC), a molecular chaperone complex that assists the folding of actin, tubulin and other proteins upon ATP hydrolysis. The TRiC complex mediates the folding of WRAP53/TCAB1, thereby regulating telomere maintenance. As part of the TRiC complex may play a role in the assembly of BBSome, a complex involved in ciliogenesis regulating transports vesicles to the cilia. The sequence is that of T-complex protein 1 subunit gamma (Cct3) from Rattus norvegicus (Rat).